A 326-amino-acid polypeptide reads, in one-letter code: Protease inhibitor (326 aa).

The signal sequence occupies residues 1–24; that stretch reads MKTIRTGMMTLAALAVLGTNVVSA. 2 repeat units span residues 177-208 and 272-304. A 2 X 32 AA approximate repeats region spans residues 177 to 304; it reads IILHVDKETK…DLKAEMKVFA (128 aa).

Post-translationally, proteolytically cleaved to yield at least three forms (BBRPI-A, -B, and -C).

It localises to the secreted. Its function is as follows. Shows inhibitory activity towards serine proteases, such as trypsin, chymotrypsin and subtilisin. May form a trypsin-inhibitor complex in a molar ratio of 1:1. This Brevibacillus choshinensis protein is Protease inhibitor.